Consider the following 26-residue polypeptide: Mitochondrial import receptor subunit TOM7-2 (26 aa).

Belongs to the Tom7 family. As to quaternary structure, forms part of the preprotein translocase complex of the outer mitochondrial membrane (TOM complex).

The protein localises to the mitochondrion outer membrane. Functionally, seems to act as a modulator of the dynamics of the mitochondrial protein transport machinery. Seems to promote the dissociation of subunits of the outer membrane translocase. This chain is Mitochondrial import receptor subunit TOM7-2 (TOM7-2), found in Solanum tuberosum (Potato).